A 1256-amino-acid chain; its full sequence is N-acetylglucosamine-1-phosphotransferase subunits alpha/beta (1256 aa).

Residues 22–42 traverse the membrane as a helical segment; the sequence is VCFLGVVVTIVSAFQFGEVVL. Residues Asn83, Asn114, Asn148, Asn179, and Asn250 are each glycosylated (N-linked (GlcNAc...) asparagine). 4 cysteine pairs are disulfide-bonded: Cys438-Cys461, Cys452-Cys468, Cys505-Cys528, and Cys519-Cys535. 2 LNR repeats span residues 438–473 and 505–545; these read CAEGCPGSWIKDGYCDKACNNSACDWDGGDCSGNSG and CNQG…ELYK. The Ca(2+) site is built by Asp449, Asp464, Asp467, Asp516, Asp531, and Asp534. N-linked (GlcNAc...) asparagine glycans are attached at residues Asn614, Asn699, Asn729, Asn829, and Asn1009. The 100-residue stretch at 699-798 folds into the DMAP1-binding domain; it reads NISLLPKDAQ…TFPAVSVKVN (100 aa). The region spanning 1005 to 1040 is the EF-hand domain; sequence VQPLNISQVFDEVDTDQSGVLSDREIRTLATRIHEL. The Ca(2+) site is built by Asp1018, Asp1020, Ser1022, and Glu1029. N-linked (GlcNAc...) asparagine glycosylation occurs at Asn1129. Residues 1215-1235 traverse the membrane as a helical segment; it reads VLATLIMFTIFSFFAEQLIAL.

This sequence belongs to the stealth family. Hexamer of two alpha, two beta and two gamma (GNPTG) subunits; disulfide-linked. The alpha and/or the beta subunits of the enzyme constitute the catalytic subunits. Interacts with LYSET; facilitates proper localization of GNPTAB. The alpha- and beta-subunits are generated by a proteolytic cleavage by MBTPS1 protease at the Lys-928-Asp-929 bond. In terms of tissue distribution, expressed in the heart, whole brain, placenta, lung, liver, skeletal muscle, kidney and pancreas.

Its subcellular location is the golgi apparatus membrane. The catalysed reaction is N(4)-[alpha-D-mannosyl-(1-&gt;2)-alpha-D-mannosyl-(glycan)]-L-asparaginyl-[protein] + UDP-N-acetyl-alpha-D-glucosamine = N(4)-[6-(N-acetyl-alpha-D-glucosaminyl-1-phospho)-alpha-D-mannosyl-(1-&gt;2)-alpha-D-mannosyl-(glycan)]-L-asparaginyl-[protein] + UMP + H(+). Functionally, catalyzes the formation of mannose 6-phosphate (M6P) markers on high mannose type oligosaccharides in the Golgi apparatus. M6P residues are required to bind to the M6P receptors (MPR), which mediate the vesicular transport of lysosomal enzymes to the endosomal/prelysosomal compartment. This chain is N-acetylglucosamine-1-phosphotransferase subunits alpha/beta (GNPTAB), found in Homo sapiens (Human).